The chain runs to 450 residues: Phosphoglucosamine mutase (450 aa).

Ser-101 functions as the Phosphoserine intermediate in the catalytic mechanism. Mg(2+)-binding residues include Ser-101, Asp-240, Asp-242, and Asp-244. A Phosphoserine modification is found at Ser-101.

It belongs to the phosphohexose mutase family. The cofactor is Mg(2+). Post-translationally, activated by phosphorylation.

The enzyme catalyses alpha-D-glucosamine 1-phosphate = D-glucosamine 6-phosphate. Catalyzes the conversion of glucosamine-6-phosphate to glucosamine-1-phosphate. The polypeptide is Phosphoglucosamine mutase (Streptococcus pneumoniae serotype 19F (strain G54)).